Here is a 209-residue protein sequence, read N- to C-terminus: Imidazole glycerol phosphate synthase subunit HisH (209 aa).

A Glutamine amidotransferase type-1 domain is found at 1–205; the sequence is MIAIIDYGMG…KGVVKQWKSS (205 aa). Cysteine 79 (nucleophile) is an active-site residue. Residues histidine 180 and glutamate 182 contribute to the active site.

In terms of assembly, heterodimer of HisH and HisF.

It is found in the cytoplasm. It catalyses the reaction 5-[(5-phospho-1-deoxy-D-ribulos-1-ylimino)methylamino]-1-(5-phospho-beta-D-ribosyl)imidazole-4-carboxamide + L-glutamine = D-erythro-1-(imidazol-4-yl)glycerol 3-phosphate + 5-amino-1-(5-phospho-beta-D-ribosyl)imidazole-4-carboxamide + L-glutamate + H(+). It carries out the reaction L-glutamine + H2O = L-glutamate + NH4(+). It functions in the pathway amino-acid biosynthesis; L-histidine biosynthesis; L-histidine from 5-phospho-alpha-D-ribose 1-diphosphate: step 5/9. Its function is as follows. IGPS catalyzes the conversion of PRFAR and glutamine to IGP, AICAR and glutamate. The HisH subunit catalyzes the hydrolysis of glutamine to glutamate and ammonia as part of the synthesis of IGP and AICAR. The resulting ammonia molecule is channeled to the active site of HisF. This is Imidazole glycerol phosphate synthase subunit HisH from Bacillus cytotoxicus (strain DSM 22905 / CIP 110041 / 391-98 / NVH 391-98).